The chain runs to 370 residues: Aldo-keto reductase NECHADRAFT_45914 (370 aa).

NADP(+) is bound at residue aspartate 78. Catalysis depends on tyrosine 83, which acts as the Proton donor. Histidine 174 is a substrate binding site. Residues serine 204–serine 205, glutamine 230, alanine 259–arginine 269, and serine 333–alanine 341 each bind NADP(+).

The protein belongs to the aldo/keto reductase family.

Its pathway is secondary metabolite biosynthesis. Functionally, aldo-keto reductase; part of the gene cluster that mediates the biosynthesis of sansalvamide, a cyclic pentadepsipeptide that shows promising results as potential anti-cancer drug. The nonribosmal peptide synthetase NRPS30 produces sansalvamide by incorporating successively one phenylalanine, one leucine, one alpha-hydroxyisocaproic acid (HICA), one valine and one leucine before sansalvamide is released from by cyclization by the terminal C domain of NRPS30. The HICA residue is probably provided by reduction of alpha-ketoisocaproate by the cluster-specific aldo-keto reductase (NECHADRAFT_45914). In Fusarium vanettenii (strain ATCC MYA-4622 / CBS 123669 / FGSC 9596 / NRRL 45880 / 77-13-4) (Fusarium solani subsp. pisi), this protein is Aldo-keto reductase NECHADRAFT_45914.